The sequence spans 77 residues: Large ribosomal subunit protein uL29 (77 aa).

It belongs to the universal ribosomal protein uL29 family.

This chain is Large ribosomal subunit protein uL29, found in Methanopyrus kandleri (strain AV19 / DSM 6324 / JCM 9639 / NBRC 100938).